Here is a 248-residue protein sequence, read N- to C-terminus: MGLSRVRAVFFDLDNTLIDTAGASRRGMLEVIKLLQSKYHYKEEAEIICDKVQVKLSKECFHPYNTCITDLRTSHWEEAIQETKGGAANRKLAEECYFLWKSTRLQHMTLAEDVKAMLTELRKEVRLLLLTNGDRQTQREKIEACACQSYFDAVVVGGEQREEKPAPSIFYYCCNLLGVQPGDCVMVGDTLETDIQGGLNAGLKATVWINKNGIVPLKSSPVPHYMVSSVLELPALLQSIDCKVSMST.

Aspartate 12 contacts Mg(2+). Residues leucine 13, aspartate 14, threonine 131, asparagine 132, and lysine 164 each coordinate phosphate. Residue aspartate 14 coordinates Mg(2+). Aspartate 189 contacts Mg(2+).

Belongs to the HAD-like hydrolase superfamily. NANP family. It depends on Mg(2+) as a cofactor.

It catalyses the reaction N-acetylneuraminate 9-phosphate + H2O = N-acetylneuraminate + phosphate. The catalysed reaction is N-glycoloylneuraminate 9-phosphate + H2O = N-glycoloylneuraminate + phosphate. The protein operates within amino-sugar metabolism; N-acetylneuraminate biosynthesis. Its activity is regulated as follows. Inhibited by calcium. Inhibited by vanadate, sodium orthovanadate and phosphonate. Functionally, catalyzes the dephosphorylation of N-acylneuraminate 9-phosphate (Neu5Ac-9-P) to N-acetylneuraminic acid (Neu5Ac or sialic acid). Can also use N-glycoloylneuraminate 9-phosphate as substrate. This is N-acylneuraminate-9-phosphatase from Homo sapiens (Human).